The sequence spans 470 residues: Dendritic cell-specific transmembrane protein (470 aa).

Over 1 to 33 (MRLWTLGTSIFLRLWGTYVFPRSPSWLDFIQHL) the chain is Cytoplasmic. The chain crosses the membrane as a helical span at residues 34–54 (GVCCFVAFLSVSLFSAAFYWI). L55 is a topological domain (extracellular). The chain crosses the membrane as a helical span at residues 56 to 76 (PPVALLSSVWMITCVFLCCSK). The Cytoplasmic portion of the chain corresponds to 77–97 (RARCFILLAVLSCGLREGRNA). A helical membrane pass occupies residues 98-118 (LIAAGTGVVIFGHVENIFYNF). Residues 119–209 (RGLLDSMTCN…MVVTTELLTS (91 aa)) lie on the Extracellular side of the membrane. Residues 210-230 (VGQKLLALAGLLLILVSTGLF) traverse the membrane as a helical segment. Residues 231 to 292 (LKRFLGPCGW…LQLTPKEKKT (62 aa)) lie on the Cytoplasmic side of the membrane. The helical transmembrane segment at 293–313 (LGLFFLPVLTYLYMWVLFAAV) threads the bilayer. The Extracellular portion of the chain corresponds to 314-376 (DYLLYRLISS…PKPRLSVSET (63 aa)). Residues 377 to 397 (WVPLSIILLTLIILGLLSSML) traverse the membrane as a helical segment. Residues 398–470 (MQLKILVSVS…QTIPANEDDL (73 aa)) are Cytoplasmic-facing.

In terms of assembly, interacts with CREB3. Monomer. Homodimer. Isoform 1 interacts (via the C-terminus cytoplasmic tail) with OS9 isoform 1 (via the C-terminus tail); the interaction induces DCSTAMP redistribution to the endoplasmic reticulum-Golgi intermediate compartment. Isoform 1 interacts (via the C-terminus cytoplasmic tail) with OS9 isoform 2 (via the C-terminus tail). Post-translationally, glycosylated. In terms of tissue distribution, expressed in macrophages and bone marrow dendritic cells (BM-DC). Weakly expressed in the spleen and lymph node. Highly expressed in multi-nuclear osteoclasts compared to mono-nuclear macrophages. Expressed in foreign body giant cells (FBGCs). Isoform 1 and isoform 2 are expressed in osteoclasts.

The protein localises to the cell membrane. It localises to the endoplasmic reticulum membrane. Its subcellular location is the endoplasmic reticulum-Golgi intermediate compartment membrane. The protein resides in the endosome. In terms of biological role, probable cell surface receptor that plays several roles in cellular fusion, cell differentiation, bone and immune homeostasis. Plays a role in TNFSF11-mediated osteoclastogenesis. Cooperates with OCSTAMP in modulating cell-cell fusion in both osteoclasts and foreign body giant cells (FBGCs). Participates in osteoclast bone resorption. Involved in inducing the expression of tartrate-resistant acid phosphatase in osteoclast precursors. Plays a role in haematopoietic stem cell differentiation of bone marrow cells toward the myeloid lineage. Inhibits the development of neutrophilic granulocytes. Plays also a role in the regulation of dendritic cell (DC) antigen presentation activity by controlling phagocytic activity. Involved in the maintenance of immune self-tolerance and avoidance of autoimmune reactions. The chain is Dendritic cell-specific transmembrane protein (Dcstamp) from Mus musculus (Mouse).